A 488-amino-acid chain; its full sequence is Altronate oxidoreductase (488 aa).

18-29 (VIQFGEGNFLRA) contacts NAD(+).

This sequence belongs to the mannitol dehydrogenase family. UxaB subfamily.

It catalyses the reaction D-altronate + NAD(+) = keto-D-tagaturonate + NADH + H(+). The protein operates within carbohydrate metabolism; pentose and glucuronate interconversion. The chain is Altronate oxidoreductase from Pectobacterium carotovorum subsp. carotovorum (strain PC1).